We begin with the raw amino-acid sequence, 78 residues long: RNA-binding protein KhpA (78 aa).

Residues 29-78 (TIIYELSVAKPDIGKIIGKEGRTIKAIRTLLVSVASRNNVRVSLEIMEEK) form the KH domain.

This sequence belongs to the KhpA RNA-binding protein family.

Its subcellular location is the cytoplasm. Functionally, a probable RNA-binding protein. In Chlamydia pneumoniae (Chlamydophila pneumoniae), this protein is RNA-binding protein KhpA.